A 342-amino-acid chain; its full sequence is Sesquiterpene synthase MBR_09977 (342 aa).

Mg(2+) contacts are provided by Asp91 and Asp96. The short motif at 91 to 96 (DDLFVD) is the DDXXXD motif element. Arg184 serves as a coordination point for substrate. Positions 230, 234, and 238 each coordinate Mg(2+).

It belongs to the terpene synthase family. It depends on Mg(2+) as a cofactor.

It catalyses the reaction (2E,6E)-farnesyl diphosphate + H2O = (+)-corvol ether B + diphosphate. It carries out the reaction (2E,6E)-farnesyl diphosphate + H2O = (+)-corvol ether A + diphosphate. Its function is as follows. Terpene synthase that catalyzes the conversion of (2E,6E)-farnesyl diphosphate (FPP) into sesquiterpenes which are important for fungi-environment interactions. Produces a mixture consisting of 8 sesquiterpenes including corvol ethers A and B, as well as traces of epizonarene, gamma-cadinene, delta-cadinene, alpha-cadinene, alpha-cadinol, and an unidentified sesquiterpene. The major product is corvol ether A. The protein is Sesquiterpene synthase MBR_09977 of Metarhizium brunneum (strain ARSEF 3297).